The primary structure comprises 316 residues: Ribosomal protein L11 methyltransferase (316 aa).

Residues T157, G178, D200, and N243 each coordinate S-adenosyl-L-methionine.

The protein belongs to the methyltransferase superfamily. PrmA family.

It is found in the cytoplasm. The enzyme catalyses L-lysyl-[protein] + 3 S-adenosyl-L-methionine = N(6),N(6),N(6)-trimethyl-L-lysyl-[protein] + 3 S-adenosyl-L-homocysteine + 3 H(+). Its function is as follows. Methylates ribosomal protein L11. This Streptococcus pneumoniae (strain ATCC 700669 / Spain 23F-1) protein is Ribosomal protein L11 methyltransferase.